A 97-amino-acid polypeptide reads, in one-letter code: Alpha-latrotoxin associated low molecular weight protein 2 (97 aa).

The first 19 residues, 1-19 (MFKLICIVFIATILSITSA), serve as a signal peptide directing secretion. Disulfide bonds link Cys36–Cys72, Cys52–Cys68, and Cys55–Cys81.

This sequence belongs to the arthropod CHH/MIH/GIH/VIH hormone family. In terms of tissue distribution, expressed by the venom gland.

It localises to the secreted. Functionally, may increase the toxicity of alpha-latrotoxin and/or other venom components. Is non-toxic to mice and to the cockroach Periplaneta americana. This Steatoda grossa (False black widow) protein is Alpha-latrotoxin associated low molecular weight protein 2.